The sequence spans 500 residues: Serine/threonine-protein phosphatase 2A 56 kDa regulatory subunit beta isoform (500 aa).

Positions 1-19 are enriched in low complexity; sequence METKLPPASTPTSPSSPGL. Disordered regions lie at residues 1–55 and 474–500; these read METK…YQSN and GTQG…GGQS. Residues Ser-32, Ser-35, Ser-44, Ser-46, Ser-47, and Ser-48 each carry the phosphoserine; by CLK2 modification. Residues 34–45 show a composition bias toward basic residues; the sequence is RSLRRARPRRSH.

This sequence belongs to the phosphatase 2A regulatory subunit B56 family. As to quaternary structure, component of the serine/threonine-protein phosphatase 2A complex (PP2A). This complex consists of a common heterodimeric core enzyme, composed of a 36 kDa catalytic subunit (subunit C) and a 65 kDa constant scaffold subunit (PR65 or subunit A), that associates with a variety of regulatory subunits. Proteins that associate with the core dimer include three families of regulatory subunits B (the R2/B/PR55/B55, R3/B''/PR72/PR130/PR59 and R5/B'/B56 families), the 48 kDa variable regulatory subunit, viral proteins, and cell signaling molecules. Interacts with SGO1. Interacts with AKT1. Highly expressed in brain.

The protein resides in the nucleus. Functionally, as the regulatory component of the serine/threonine-protein phosphatase 2A (PP2A) holoenzyme, modulates substrate specificity, subcellular localization, and responsiveness to phosphorylation. The phosphorylated form mediates the interaction between PP2A and AKT1, leading to AKT1 dephosphorylation. The sequence is that of Serine/threonine-protein phosphatase 2A 56 kDa regulatory subunit beta isoform (PPP2R5B) from Oryctolagus cuniculus (Rabbit).